A 176-amino-acid chain; its full sequence is Large ribosomal subunit protein uL16 (176 aa).

This sequence belongs to the universal ribosomal protein uL16 family.

The chain is Large ribosomal subunit protein uL16 from Thermoplasma volcanium (strain ATCC 51530 / DSM 4299 / JCM 9571 / NBRC 15438 / GSS1).